Reading from the N-terminus, the 81-residue chain is Putative defensin-like protein 52 (81 aa).

Positions 1–20 (MTFFLVIILAISSSNYNVLA) are cleaved as a signal peptide. 2 cysteine pairs are disulfide-bonded: Cys-31–Cys-55 and Cys-41–Cys-64.

It belongs to the DEFL family.

The protein localises to the secreted. This is Putative defensin-like protein 52 from Arabidopsis thaliana (Mouse-ear cress).